The sequence spans 293 residues: Probable xyloglucan endotransglucosylase/hydrolase protein 7 (293 aa).

The N-terminal stretch at 1–29 (MVVSLFSSRNVFYTLSLCLFAALYQPVMS) is a signal peptide. The GH16 domain occupies 30-223 (RPAKFEDDFR…WSRAPFYAYY (194 aa)). Catalysis depends on Glu109, which acts as the Nucleophile. Glu113 functions as the Proton donor in the catalytic mechanism. Xyloglucan is bound at residue Glu113. An N-linked (GlcNAc...) asparagine glycan is attached at Asn117. Xyloglucan is bound by residues 126–128 (QTN), 136–138 (DRE), 202–203 (DW), and Gly207. A glycan (N-linked (GlcNAc...) asparagine) is linked at Asn213. 2 cysteine pairs are disulfide-bonded: Cys231–Cys239 and Cys276–Cys289. Xyloglucan is bound at residue Arg281.

Belongs to the glycosyl hydrolase 16 family. XTH group 1 subfamily. In terms of processing, contains at least one intrachain disulfide bond essential for its enzymatic activity.

It localises to the secreted. The protein localises to the cell wall. The protein resides in the extracellular space. It is found in the apoplast. It catalyses the reaction breaks a beta-(1-&gt;4) bond in the backbone of a xyloglucan and transfers the xyloglucanyl segment on to O-4 of the non-reducing terminal glucose residue of an acceptor, which can be a xyloglucan or an oligosaccharide of xyloglucan.. Functionally, catalyzes xyloglucan endohydrolysis (XEH) and/or endotransglycosylation (XET). Cleaves and religates xyloglucan polymers, an essential constituent of the primary cell wall, and thereby participates in cell wall construction of growing tissues. The sequence is that of Probable xyloglucan endotransglucosylase/hydrolase protein 7 (XTH7) from Arabidopsis thaliana (Mouse-ear cress).